The sequence spans 403 residues: Protein LAZ1 homolog 2 (403 aa).

A run of 6 helical transmembrane segments spans residues 16–36 (SLIIGGSFATVAICLSLYSIL), 50–70 (WIVSVLFMVPVYATESIISLS), 162–182 (MILKTFCAFLTFLLELLGVYG), 191–211 (GYPYIVVVLNFSQMWALFCLV), 236–256 (IVFATWWQGFGIALLCYYGIL), and 269–289 (FLICIEMAIAAVAHLFVFPAE). Residues 381–403 (SDGKEETEVTEEVTVETSVPPKE) are disordered.

Belongs to the TMEM184 family.

It is found in the membrane. This chain is Protein LAZ1 homolog 2, found in Arabidopsis thaliana (Mouse-ear cress).